The chain runs to 391 residues: Secreted aspartic protease 1 (391 aa).

The signal sequence occupies residues 1–18 (MFLKNIFIALAIALLVDA). Positions 19–50 (SPAKRSPGFVTLDFDVIKTPVNATGQEGKVKR) are cleaved as a propeptide — activation peptide. N-linked (GlcNAc...) asparagine glycosylation is present at Asn-40. The region spanning 64-377 (YAADITIGSN…DLDDDKISLA (314 aa)) is the Peptidase A1 domain. The active site involves Asp-82. Pepstatin A is bound at residue 82 to 84 (DTG). Cys-97 and Cys-109 are disulfide-bonded. 135–136 (GD) is a pepstatin A binding site. Zn(2+) is bound by residues Asp-241 and Asp-263. Asp-267 is an active-site residue. 267 to 271 (DSGTT) contacts pepstatin A. The cysteines at positions 305 and 343 are disulfide-linked.

This sequence belongs to the peptidase A1 family. In terms of assembly, monomer.

It is found in the secreted. The enzyme catalyses Preferential cleavage at the carboxyl of hydrophobic amino acids, but fails to cleave 15-Leu-|-Tyr-16, 16-Tyr-|-Leu-17 and 24-Phe-|-Phe-25 of insulin B chain. Activates trypsinogen, and degrades keratin.. Its activity is regulated as follows. Inhibited by pepstatin A analogs and squash aspartic peptidase inhibitor (SQAPI). Functionally, secreted aspartic peptidases (SAPs) are a group of ten acidic hydrolases considered as key virulence factors. These enzymes supply the fungus with nutrient amino acids as well as are able to degrade the selected host's proteins involved in the immune defense. Induces host inflammatory cytokine production in a proteolytic activity-independent way. Plays a role in tissue damage during superficial infection. Moreover, acts toward human hemoglobin though limited proteolysis to generate a variety of antimicrobial hemocidins, enabling to compete with the other microorganisms of the same physiological niche using the microbicidal peptides generated from the host protein. In terms of biological role, plays a key role in defense against host by cleaving histatin-5 (Hst 5), a peptide from human saliva that carries out fungicidal activity. The cleavage rate decreases in an order of SAP2 &gt; SAP9 &gt; SAP3 &gt; SAP7 &gt; SAP4 &gt; SAP1 &gt; SAP8. The first cleavage occurs between residues 'Lys-17' and 'His-18' of Hst 5, giving DSHAKRHHGYKRKFHEK and HHSHRGY peptides. Further fragmentation by SAP1 results in AKRHHGYKRKFHEK and AKRHHGY products. The protein is Secreted aspartic protease 1 of Candida albicans (strain SC5314 / ATCC MYA-2876) (Yeast).